Consider the following 499-residue polypeptide: Lysine--tRNA ligase (499 aa).

Glu408 and Glu415 together coordinate Mg(2+).

This sequence belongs to the class-II aminoacyl-tRNA synthetase family. In terms of assembly, homodimer. It depends on Mg(2+) as a cofactor.

The protein resides in the cytoplasm. The catalysed reaction is tRNA(Lys) + L-lysine + ATP = L-lysyl-tRNA(Lys) + AMP + diphosphate. The polypeptide is Lysine--tRNA ligase (Thermoanaerobacter sp. (strain X514)).